Here is a 442-residue protein sequence, read N- to C-terminus: 3-phosphoshikimate 1-carboxyvinyltransferase (442 aa).

Residues K25, S26, and R30 each coordinate 3-phosphoshikimate. K25 serves as a coordination point for phosphoenolpyruvate. 2 residues coordinate phosphoenolpyruvate: G96 and R124. The 3-phosphoshikimate site is built by S171, S172, Q173, S203, D325, and K352. Q173 serves as a coordination point for phosphoenolpyruvate. The Proton acceptor role is filled by D325. Phosphoenolpyruvate contacts are provided by R356, R400, and K425.

This sequence belongs to the EPSP synthase family. As to quaternary structure, monomer.

It localises to the cytoplasm. The enzyme catalyses 3-phosphoshikimate + phosphoenolpyruvate = 5-O-(1-carboxyvinyl)-3-phosphoshikimate + phosphate. It participates in metabolic intermediate biosynthesis; chorismate biosynthesis; chorismate from D-erythrose 4-phosphate and phosphoenolpyruvate: step 6/7. Functionally, catalyzes the transfer of the enolpyruvyl moiety of phosphoenolpyruvate (PEP) to the 5-hydroxyl of shikimate-3-phosphate (S3P) to produce enolpyruvyl shikimate-3-phosphate and inorganic phosphate. The sequence is that of 3-phosphoshikimate 1-carboxyvinyltransferase from Bordetella pertussis (strain Tohama I / ATCC BAA-589 / NCTC 13251).